A 500-amino-acid chain; its full sequence is Lysine--tRNA ligase (500 aa).

E410 and E417 together coordinate Mg(2+).

Belongs to the class-II aminoacyl-tRNA synthetase family. As to quaternary structure, homodimer. Mg(2+) is required as a cofactor.

The protein resides in the cytoplasm. It catalyses the reaction tRNA(Lys) + L-lysine + ATP = L-lysyl-tRNA(Lys) + AMP + diphosphate. This is Lysine--tRNA ligase from Pseudomonas putida (strain ATCC 700007 / DSM 6899 / JCM 31910 / BCRC 17059 / LMG 24140 / F1).